A 320-amino-acid chain; its full sequence is tRNA dimethylallyltransferase (320 aa).

Residue 17-24 (GPTAVGKT) coordinates ATP. 19-24 (TAVGKT) contributes to the substrate binding site. An interaction with substrate tRNA region spans residues 42–45 (DSMQ).

Belongs to the IPP transferase family. In terms of assembly, monomer. It depends on Mg(2+) as a cofactor.

The catalysed reaction is adenosine(37) in tRNA + dimethylallyl diphosphate = N(6)-dimethylallyladenosine(37) in tRNA + diphosphate. In terms of biological role, catalyzes the transfer of a dimethylallyl group onto the adenine at position 37 in tRNAs that read codons beginning with uridine, leading to the formation of N6-(dimethylallyl)adenosine (i(6)A). This chain is tRNA dimethylallyltransferase, found in Bacillus thuringiensis (strain Al Hakam).